Reading from the N-terminus, the 414-residue chain is Histidine--tRNA ligase (414 aa).

Belongs to the class-II aminoacyl-tRNA synthetase family. In terms of assembly, homodimer.

It localises to the cytoplasm. It carries out the reaction tRNA(His) + L-histidine + ATP = L-histidyl-tRNA(His) + AMP + diphosphate + H(+). This chain is Histidine--tRNA ligase, found in Rickettsia rickettsii (strain Iowa).